The primary structure comprises 387 residues: Protein FAM153B (387 aa).

Disordered regions lie at residues 233-256 (SYNGEEEDPEEVKTSLGVPQRGDL) and 327-374 (TITG…KKSR). A compositionally biased stretch (low complexity) spans 336 to 345 (SASPSSAPAE). Basic and acidic residues predominate over residues 347-359 (ATEKTKVEEEVKT). Residues 360–374 (RKPKKKTRKPSKKSR) show a composition bias toward basic residues.

This sequence belongs to the FAM153 family.

The sequence is that of Protein FAM153B (FAM153B) from Homo sapiens (Human).